The following is a 258-amino-acid chain: Imidazole glycerol phosphate synthase subunit HisF (258 aa).

Residues Asp11 and Asp130 contribute to the active site.

The protein belongs to the HisA/HisF family. Heterodimer of HisH and HisF.

It localises to the cytoplasm. The enzyme catalyses 5-[(5-phospho-1-deoxy-D-ribulos-1-ylimino)methylamino]-1-(5-phospho-beta-D-ribosyl)imidazole-4-carboxamide + L-glutamine = D-erythro-1-(imidazol-4-yl)glycerol 3-phosphate + 5-amino-1-(5-phospho-beta-D-ribosyl)imidazole-4-carboxamide + L-glutamate + H(+). It functions in the pathway amino-acid biosynthesis; L-histidine biosynthesis; L-histidine from 5-phospho-alpha-D-ribose 1-diphosphate: step 5/9. In terms of biological role, IGPS catalyzes the conversion of PRFAR and glutamine to IGP, AICAR and glutamate. The HisF subunit catalyzes the cyclization activity that produces IGP and AICAR from PRFAR using the ammonia provided by the HisH subunit. The sequence is that of Imidazole glycerol phosphate synthase subunit HisF from Rhodopseudomonas palustris (strain BisB18).